The following is a 158-amino-acid chain: Transcriptional repressor NrdR (158 aa).

The segment at 3–34 is a zinc-finger region; the sequence is CPYCQSEDTQVKDSRPAEDGAVIRRRRVCSVC. The 91-residue stretch at 49-139 folds into the ATP-cone domain; sequence LMVVKKSGRR…VYRNFSKAVD (91 aa).

This sequence belongs to the NrdR family. The cofactor is Zn(2+).

Its function is as follows. Negatively regulates transcription of bacterial ribonucleotide reductase nrd genes and operons by binding to NrdR-boxes. In Brucella abortus (strain S19), this protein is Transcriptional repressor NrdR.